A 457-amino-acid polypeptide reads, in one-letter code: UDP-N-acetylmuramate--L-alanine ligase (457 aa).

An ATP-binding site is contributed by 117 to 123; that stretch reads GTHGKTT.

It belongs to the MurCDEF family.

Its subcellular location is the cytoplasm. It carries out the reaction UDP-N-acetyl-alpha-D-muramate + L-alanine + ATP = UDP-N-acetyl-alpha-D-muramoyl-L-alanine + ADP + phosphate + H(+). It participates in cell wall biogenesis; peptidoglycan biosynthesis. Cell wall formation. This is UDP-N-acetylmuramate--L-alanine ligase from Clostridium kluyveri (strain NBRC 12016).